Consider the following 130-residue polypeptide: Small ribosomal subunit protein uS8 (130 aa).

This sequence belongs to the universal ribosomal protein uS8 family. Part of the 30S ribosomal subunit.

In terms of biological role, one of the primary rRNA binding proteins, it binds directly to 16S rRNA central domain where it helps coordinate assembly of the platform of the 30S subunit. This is Small ribosomal subunit protein uS8 from Methanococcus aeolicus (strain ATCC BAA-1280 / DSM 17508 / OCM 812 / Nankai-3).